A 261-amino-acid polypeptide reads, in one-letter code: Glucose 1-dehydrogenase A (261 aa).

Residue 11-35 (VITGGSTGLGRAMAVRFGQEEAKVV) coordinates NADP(+). Ser-145 contacts substrate. Residue Tyr-158 is the Proton acceptor of the active site.

Belongs to the short-chain dehydrogenases/reductases (SDR) family. In terms of assembly, homotetramer.

The enzyme catalyses D-glucose + NAD(+) = D-glucono-1,5-lactone + NADH + H(+). It catalyses the reaction D-glucose + NADP(+) = D-glucono-1,5-lactone + NADPH + H(+). This is Glucose 1-dehydrogenase A (gdhA) from Priestia megaterium (Bacillus megaterium).